Consider the following 634-residue polypeptide: 1-deoxy-D-xylulose-5-phosphate synthase (634 aa).

Residues H74 and 115–117 contribute to the thiamine diphosphate site; that span reads AHS. D146 contacts Mg(2+). Residues 147 to 148, N176, Y283, and E365 contribute to the thiamine diphosphate site; that span reads GA. N176 contributes to the Mg(2+) binding site.

Belongs to the transketolase family. DXPS subfamily. As to quaternary structure, homodimer. Mg(2+) is required as a cofactor. The cofactor is thiamine diphosphate.

It carries out the reaction D-glyceraldehyde 3-phosphate + pyruvate + H(+) = 1-deoxy-D-xylulose 5-phosphate + CO2. The protein operates within metabolic intermediate biosynthesis; 1-deoxy-D-xylulose 5-phosphate biosynthesis; 1-deoxy-D-xylulose 5-phosphate from D-glyceraldehyde 3-phosphate and pyruvate: step 1/1. Catalyzes the acyloin condensation reaction between C atoms 2 and 3 of pyruvate and glyceraldehyde 3-phosphate to yield 1-deoxy-D-xylulose-5-phosphate (DXP). This is 1-deoxy-D-xylulose-5-phosphate synthase from Burkholderia cenocepacia (strain ATCC BAA-245 / DSM 16553 / LMG 16656 / NCTC 13227 / J2315 / CF5610) (Burkholderia cepacia (strain J2315)).